We begin with the raw amino-acid sequence, 549 residues long: Glucose-6-phosphate isomerase (549 aa).

The Proton donor role is filled by E353. Active-site residues include H384 and K512.

Belongs to the GPI family.

Its subcellular location is the cytoplasm. It carries out the reaction alpha-D-glucose 6-phosphate = beta-D-fructose 6-phosphate. It participates in carbohydrate biosynthesis; gluconeogenesis. It functions in the pathway carbohydrate degradation; glycolysis; D-glyceraldehyde 3-phosphate and glycerone phosphate from D-glucose: step 2/4. Catalyzes the reversible isomerization of glucose-6-phosphate to fructose-6-phosphate. This is Glucose-6-phosphate isomerase from Alteromonas mediterranea (strain DSM 17117 / CIP 110805 / LMG 28347 / Deep ecotype).